The chain runs to 371 residues: 3-dehydroquinate synthase (371 aa).

Residues 72 to 77, 106 to 110, 130 to 131, K143, K152, and 170 to 173 each bind NAD(+); these read DGEEHK, GVVGD, TT, and TLKT. Positions 185, 248, and 265 each coordinate Zn(2+).

Belongs to the sugar phosphate cyclases superfamily. Dehydroquinate synthase family. Co(2+) is required as a cofactor. It depends on Zn(2+) as a cofactor. The cofactor is NAD(+).

The protein localises to the cytoplasm. The catalysed reaction is 7-phospho-2-dehydro-3-deoxy-D-arabino-heptonate = 3-dehydroquinate + phosphate. It participates in metabolic intermediate biosynthesis; chorismate biosynthesis; chorismate from D-erythrose 4-phosphate and phosphoenolpyruvate: step 2/7. In terms of biological role, catalyzes the conversion of 3-deoxy-D-arabino-heptulosonate 7-phosphate (DAHP) to dehydroquinate (DHQ). The sequence is that of 3-dehydroquinate synthase from Pelotomaculum thermopropionicum (strain DSM 13744 / JCM 10971 / SI).